The chain runs to 170 residues: Urease accessory protein UreE (170 aa).

This sequence belongs to the UreE family.

The protein localises to the cytoplasm. In terms of biological role, involved in urease metallocenter assembly. Binds nickel. Probably functions as a nickel donor during metallocenter assembly. In Helicobacter pylori (strain HPAG1), this protein is Urease accessory protein UreE.